We begin with the raw amino-acid sequence, 78 residues long: Translation initiation factor IF-1 (78 aa).

One can recognise an S1-like domain in the interval 2–78 (SKNNLNETES…TRARITYRFK (77 aa)).

This sequence belongs to the IF-1 family. As to quaternary structure, component of the 30S ribosomal translation pre-initiation complex which assembles on the 30S ribosome in the order IF-2 and IF-3, IF-1 and N-formylmethionyl-tRNA(fMet); mRNA recruitment can occur at any time during PIC assembly.

The protein resides in the cytoplasm. Functionally, one of the essential components for the initiation of protein synthesis. Stabilizes the binding of IF-2 and IF-3 on the 30S subunit to which N-formylmethionyl-tRNA(fMet) subsequently binds. Helps modulate mRNA selection, yielding the 30S pre-initiation complex (PIC). Upon addition of the 50S ribosomal subunit IF-1, IF-2 and IF-3 are released leaving the mature 70S translation initiation complex. The chain is Translation initiation factor IF-1 from Onion yellows phytoplasma (strain OY-M).